The chain runs to 92 residues: Small ribosomal subunit protein uS19 (92 aa).

Belongs to the universal ribosomal protein uS19 family.

In terms of biological role, protein S19 forms a complex with S13 that binds strongly to the 16S ribosomal RNA. The polypeptide is Small ribosomal subunit protein uS19 (Corynebacterium efficiens (strain DSM 44549 / YS-314 / AJ 12310 / JCM 11189 / NBRC 100395)).